A 1050-amino-acid chain; its full sequence is Valine--tRNA ligase (1050 aa).

A compositionally biased stretch (basic and acidic residues) spans 37-57 (EKKAAASDKPVKEAKAKKEQT). A disordered region spans residues 37-72 (EKKAAASDKPVKEAKAKKEQTVEAAEPVDQTPTGQR). The 'HIGH' region signature appears at 127 to 137 (PNVTGNLHVGH). The 'KMSKS' region motif lies at 642–646 (KMSKS). Position 645 (K645) interacts with ATP.

It belongs to the class-I aminoacyl-tRNA synthetase family.

The catalysed reaction is tRNA(Val) + L-valine + ATP = L-valyl-tRNA(Val) + AMP + diphosphate. In Caenorhabditis elegans, this protein is Valine--tRNA ligase.